A 513-amino-acid chain; its full sequence is 2-isopropylmalate synthase (513 aa).

Positions 4 to 268 (IKIFDTTLRD…ETGIRTELIY (265 aa)) constitute a Pyruvate carboxyltransferase domain. Mn(2+) contacts are provided by Asp-13, His-203, His-205, and Asn-239. A regulatory domain region spans residues 392-513 (RLVHFHVHTG…GLLRKNGGVE (122 aa)).

This sequence belongs to the alpha-IPM synthase/homocitrate synthase family. LeuA type 1 subfamily. As to quaternary structure, homodimer. It depends on Mn(2+) as a cofactor.

It is found in the cytoplasm. The enzyme catalyses 3-methyl-2-oxobutanoate + acetyl-CoA + H2O = (2S)-2-isopropylmalate + CoA + H(+). It participates in amino-acid biosynthesis; L-leucine biosynthesis; L-leucine from 3-methyl-2-oxobutanoate: step 1/4. Functionally, catalyzes the condensation of the acetyl group of acetyl-CoA with 3-methyl-2-oxobutanoate (2-ketoisovalerate) to form 3-carboxy-3-hydroxy-4-methylpentanoate (2-isopropylmalate). This is 2-isopropylmalate synthase from Thermotoga neapolitana (strain ATCC 49049 / DSM 4359 / NBRC 107923 / NS-E).